The chain runs to 580 residues: D-erythrulose kinase (580 aa).

A DhaK domain is found at 7 to 327; the sequence is DPARFTEDML…WAAPADTPAY (321 aa). His-217 acts as the Tele-hemiaminal-histidine intermediate in catalysis. Residues 329–360 form a disordered region; it reads KGAAQQHVSGERRSEATARSASSGPKLAELSD. Residues 368 to 570 form the DhaL domain; sequence RLVARAFDAM…LALCARTVAD (203 aa). Residues 397–403, 443–444, Gly-485, Arg-542, and 555–557 each bind ATP; these read DGDHGRG, TS, and DAG.

It carries out the reaction D-erythrulose + ATP = D-erythrulose 4-phosphate + ADP + H(+). It functions in the pathway carbohydrate metabolism; erythritol degradation. It participates in carbohydrate metabolism; D-threitol degradation. Functionally, catalyzes the phosphorylation of D-erythrulose to D-erythrulose-4P. Involved in the degradation pathways of erythritol and D-threitol, that allow M.smegmatis to grow on these compounds as the sole carbon source. In Mycolicibacterium smegmatis (strain ATCC 700084 / mc(2)155) (Mycobacterium smegmatis), this protein is D-erythrulose kinase.